Here is a 271-residue protein sequence, read N- to C-terminus: Imidazole glycerol phosphate synthase subunit HisF (271 aa).

Residues Asp12 and Asp131 contribute to the active site.

The protein belongs to the HisA/HisF family. As to quaternary structure, heterodimer of HisH and HisF.

It is found in the cytoplasm. It carries out the reaction 5-[(5-phospho-1-deoxy-D-ribulos-1-ylimino)methylamino]-1-(5-phospho-beta-D-ribosyl)imidazole-4-carboxamide + L-glutamine = D-erythro-1-(imidazol-4-yl)glycerol 3-phosphate + 5-amino-1-(5-phospho-beta-D-ribosyl)imidazole-4-carboxamide + L-glutamate + H(+). The protein operates within amino-acid biosynthesis; L-histidine biosynthesis; L-histidine from 5-phospho-alpha-D-ribose 1-diphosphate: step 5/9. Its function is as follows. IGPS catalyzes the conversion of PRFAR and glutamine to IGP, AICAR and glutamate. The HisF subunit catalyzes the cyclization activity that produces IGP and AICAR from PRFAR using the ammonia provided by the HisH subunit. This chain is Imidazole glycerol phosphate synthase subunit HisF, found in Methanospirillum hungatei JF-1 (strain ATCC 27890 / DSM 864 / NBRC 100397 / JF-1).